The chain runs to 477 residues: Protein translocase subunit SecY (477 aa).

Helical transmembrane passes span 28-48 (FMISFLITVVLLVLFRVLAII), 67-89 (FFSLFNLLGGGGLNQLSLFAVGI), 130-150 (IITLPFALVQSFAVIQIATNS), 165-185 (DFVAFYIIAMTAGTYLSVFLG), 196-216 (GITLLILSGILAQLPEGFIAA), 234-254 (AISFFIYFMAFVTLLFATTFI), 286-306 (SAGVIPVIFASSIMSIPVTIA), 329-349 (GIVLYGILVILFSFFYSYIQI), 387-407 (FIGAPFLTVIAIIPYIVSALI), and 413-433 (LSLGGTGIIIIVTAVVEFMSA).

Belongs to the SecY/SEC61-alpha family. Component of the Sec protein translocase complex. Heterotrimer consisting of SecY, SecE and SecG subunits. The heterotrimers can form oligomers, although 1 heterotrimer is thought to be able to translocate proteins. Interacts with the ribosome. Interacts with SecDF, and other proteins may be involved. Interacts with SecA.

The protein localises to the cell membrane. Its function is as follows. The central subunit of the protein translocation channel SecYEG. Consists of two halves formed by TMs 1-5 and 6-10. These two domains form a lateral gate at the front which open onto the bilayer between TMs 2 and 7, and are clamped together by SecE at the back. The channel is closed by both a pore ring composed of hydrophobic SecY resides and a short helix (helix 2A) on the extracellular side of the membrane which forms a plug. The plug probably moves laterally to allow the channel to open. The ring and the pore may move independently. The protein is Protein translocase subunit SecY of Mycoplasma pneumoniae (strain ATCC 29342 / M129 / Subtype 1) (Mycoplasmoides pneumoniae).